We begin with the raw amino-acid sequence, 517 residues long: DNA primase DnaG (517 aa).

The region spanning 171 to 257 is the Toprim domain; the sequence is DAIIILEGRA…CVEDLVQKEV (87 aa). 3 residues coordinate Mg(2+): Glu-177, Asp-219, and Asp-221.

This sequence belongs to the archaeal DnaG primase family. As to quaternary structure, forms a ternary complex with MCM helicase and DNA. Component of the archaeal exosome complex. It depends on Mg(2+) as a cofactor.

It carries out the reaction ssDNA + n NTP = ssDNA/pppN(pN)n-1 hybrid + (n-1) diphosphate.. In terms of biological role, RNA polymerase that catalyzes the synthesis of short RNA molecules used as primers for DNA polymerase during DNA replication. Also part of the exosome, which is a complex involved in RNA degradation. Acts as a poly(A)-binding protein that enhances the interaction between heteromeric, adenine-rich transcripts and the exosome. This chain is DNA primase DnaG, found in Methanosarcina barkeri (strain Fusaro / DSM 804).